We begin with the raw amino-acid sequence, 289 residues long: ATP synthase mitochondrial F1 complex assembly factor 2 (289 aa).

The transit peptide at 1–40 (MWRSCLRLRDGGRRLLNRPAGGPSASMSPGPTIPSPARAY) directs the protein to the mitochondrion. Residues 13 to 40 (RRLLNRPAGGPSASMSPGPTIPSPARAY) are disordered. At lysine 133 the chain carries N6-succinyllysine.

It belongs to the ATP12 family. Interacts with ATP5F1B; involved in the assembly of the F1 component of the mitochondrial ATP synthase (ATPase). Interacts with FMC1. In terms of tissue distribution, widely expressed.

The protein resides in the mitochondrion inner membrane. In terms of biological role, plays a role in the assembly of the F1 component of the mitochondrial ATP synthase (ATPase). This Homo sapiens (Human) protein is ATP synthase mitochondrial F1 complex assembly factor 2.